The following is a 398-amino-acid chain: 1-deoxy-D-xylulose 5-phosphate reductoisomerase (398 aa).

8 residues coordinate NADPH: threonine 10, glycine 11, serine 12, isoleucine 13, glycine 36, lysine 37, asparagine 38, and asparagine 124. Lysine 125 is a 1-deoxy-D-xylulose 5-phosphate binding site. Glutamate 126 provides a ligand contact to NADPH. Residue aspartate 150 coordinates Mn(2+). Residues serine 151, glutamate 152, serine 186, and histidine 209 each coordinate 1-deoxy-D-xylulose 5-phosphate. Residue glutamate 152 participates in Mn(2+) binding. Glycine 215 lines the NADPH pocket. 4 residues coordinate 1-deoxy-D-xylulose 5-phosphate: serine 222, asparagine 227, lysine 228, and glutamate 231. Glutamate 231 serves as a coordination point for Mn(2+).

It belongs to the DXR family. Homodimer. Mg(2+) is required as a cofactor. Mn(2+) serves as cofactor.

It carries out the reaction 2-C-methyl-D-erythritol 4-phosphate + NADP(+) = 1-deoxy-D-xylulose 5-phosphate + NADPH + H(+). Its pathway is isoprenoid biosynthesis; isopentenyl diphosphate biosynthesis via DXP pathway; isopentenyl diphosphate from 1-deoxy-D-xylulose 5-phosphate: step 1/6. Its function is as follows. Catalyzes the NADPH-dependent rearrangement and reduction of 1-deoxy-D-xylulose-5-phosphate (DXP) to 2-C-methyl-D-erythritol 4-phosphate (MEP). The protein is 1-deoxy-D-xylulose 5-phosphate reductoisomerase of Salmonella choleraesuis (strain SC-B67).